Here is a 61-residue protein sequence, read N- to C-terminus: Bacteriocin leucocin-B (61 aa).

The propeptide occupies 1 to 24 (MNNMKSADNYQQLDNNALEQVVGG). The cysteines at positions 33 and 38 are disulfide-linked.

It belongs to the bacteriocin class IIA/YGNGV family.

Its subcellular location is the secreted. Functionally, active against L.monocytogenes and several lactic acid bacteria. The polypeptide is Bacteriocin leucocin-B (Leuconostoc carnosum).